The following is a 279-amino-acid chain: Large ribosomal subunit protein uL2 (279 aa).

Positions 223–279 (MAMNPVDHPMGGGEGKSKSGGGRKHPKSPWGQLAKGLKTRNKKKASSKLIVRGRKSK) are disordered. Over residues 232-242 (MGGGEGKSKSG) the composition is skewed to gly residues. Residues 259–279 (LKTRNKKKASSKLIVRGRKSK) show a composition bias toward basic residues.

It belongs to the universal ribosomal protein uL2 family. In terms of assembly, part of the 50S ribosomal subunit. Forms a bridge to the 30S subunit in the 70S ribosome.

Functionally, one of the primary rRNA binding proteins. Required for association of the 30S and 50S subunits to form the 70S ribosome, for tRNA binding and peptide bond formation. It has been suggested to have peptidyltransferase activity; this is somewhat controversial. Makes several contacts with the 16S rRNA in the 70S ribosome. The chain is Large ribosomal subunit protein uL2 from Prosthecochloris aestuarii (strain DSM 271 / SK 413).